The sequence spans 165 residues: Endoribonuclease YbeY (165 aa).

Residues His-130, His-134, and His-140 each contribute to the Zn(2+) site.

The protein belongs to the endoribonuclease YbeY family. Zn(2+) serves as cofactor.

It localises to the cytoplasm. Single strand-specific metallo-endoribonuclease involved in late-stage 70S ribosome quality control and in maturation of the 3' terminus of the 16S rRNA. The sequence is that of Endoribonuclease YbeY from Streptococcus pneumoniae serotype 4 (strain ATCC BAA-334 / TIGR4).